A 300-amino-acid chain; its full sequence is Fatty acid hydroxylase uhd1 (300 aa).

Residues glycine 14 to glycine 20, arginine 39, aspartate 63 to leucine 64, valine 83 to serine 85, tyrosine 156, lysine 160, proline 183 to isoleucine 186, and serine 199 each bind NADP(+). The Proton donor role is filled by lysine 160.

It belongs to the NAD(P)-dependent epimerase/dehydratase family. Dihydroflavonol-4-reductase subfamily.

Its pathway is secondary metabolite biosynthesis. Its function is as follows. Fatty acid hydroxylase; part of the gene cluster that mediates the biosynthesis of the glycolipid biosurfactant ustilagic acid (UA). UA is a secreted cellobiose glycolipid that is toxic for many microorganisms and confers biocontrol activity to U.maydis. UA consists of 15,16-dihydroxypalmitic or 2,15,16-trihydroxypalmitic acid, which is O-glycosidically linked to cellobiose at its terminal hydroxyl group. In addition, the cellobiose moiety is acetylated and acylated with a short-chain hydroxy fatty acid. UA biosynthesis starts with omega-hydroxylation of palmitic acid catalyzed by the cytochrome P450 monooxygenase cyp1. Terminal hydroxylation of palmitic acid precedes subterminal hydroxylation catalyzed by the cytochrome P450 monooxygenase cyp2. Sequential glucosylation of the hydroxy fatty acid is probably catalyzed by the glycosyltransferase ugt1. The cellobiose lipid is further decorated by acetylation of the proximal glucose residue and by acylation with a short-chain beta-hydroxy fatty acid at the distal glucose residue. The acyltransferase uat1 may be a good candidate for catalyzing either acetylation or acylation of the cellobiose lipid. The fatty acid synthase fas2 may be involved in synthesis of the carbon backbone of the short-chain beta-hydroxy fatty acid esterified to the cellobiose disaccharide. The secreted UA consists of a mixture of both alpha-hydroxylated and non-hydroxylated glycolipids; therefore, alpha-hydroxylation of the long-chain fatty, catalyzed by the fatty acid hydroxylase ahd1, occurs late in UA biosynthesis and may be the last step before secretion. This chain is Fatty acid hydroxylase uhd1, found in Mycosarcoma maydis (Corn smut fungus).